The sequence spans 787 residues: Glycine-rich domain-containing protein 2 (787 aa).

As to expression, expressed in leaves, inflorescences, buds, flowers and immature siliques.

Its function is as follows. Involved in development and stress responses, probably through an auxin-dependent mechanism. This is Glycine-rich domain-containing protein 2 from Arabidopsis thaliana (Mouse-ear cress).